The primary structure comprises 268 residues: MTIKVGVTGVCGRMGRMLVEATHKAQGCMLGAASEYPGHTLIGADAGELAGVGKLGVLVGGDAETTFRDADVVIDFSVVEATLAHLRLALAQGTPIVIGTTGFSAAERQQIALAAERIPVVFAPNYAVGVNLLFKIAAEVAAVLGGEYDIEIVEAHHRHKVDAPSGTALGLGQAIAEAVERNLDEVAIYGRQGQTGARDPQTIGFSTIRGGDVVGDHTAMFMTDGERLELTHRASSRMTFAKGAVRAAKWVVEQKPGLYDMRDILGFK.

Residues 9 to 14, glutamate 35, 99 to 101, and 123 to 126 contribute to the NAD(+) site; these read GVCGRM, GTT, and APNY. Catalysis depends on histidine 156, which acts as the Proton donor/acceptor. Histidine 157 contributes to the (S)-2,3,4,5-tetrahydrodipicolinate binding site. Residue lysine 160 is the Proton donor of the active site. Position 166–167 (166–167) interacts with (S)-2,3,4,5-tetrahydrodipicolinate; the sequence is GT.

Belongs to the DapB family.

It is found in the cytoplasm. The enzyme catalyses (S)-2,3,4,5-tetrahydrodipicolinate + NAD(+) + H2O = (2S,4S)-4-hydroxy-2,3,4,5-tetrahydrodipicolinate + NADH + H(+). It catalyses the reaction (S)-2,3,4,5-tetrahydrodipicolinate + NADP(+) + H2O = (2S,4S)-4-hydroxy-2,3,4,5-tetrahydrodipicolinate + NADPH + H(+). The protein operates within amino-acid biosynthesis; L-lysine biosynthesis via DAP pathway; (S)-tetrahydrodipicolinate from L-aspartate: step 4/4. Functionally, catalyzes the conversion of 4-hydroxy-tetrahydrodipicolinate (HTPA) to tetrahydrodipicolinate. This chain is 4-hydroxy-tetrahydrodipicolinate reductase, found in Magnetococcus marinus (strain ATCC BAA-1437 / JCM 17883 / MC-1).